A 569-amino-acid chain; its full sequence is Aspartate--tRNA ligase, cytoplasmic 2 (569 aa).

The disordered stretch occupies residues 1-23; that stretch reads MSEENNHKEKSKNEIKKEKKKIE. The tract at residues 292-295 is aspartate; it reads QFYR. Position 314 (R314) interacts with L-aspartate. Residues 314 to 316 and 322 to 324 each bind ATP; these read RTD and RHL. Residues S475 and R479 each coordinate L-aspartate. Position 540–543 (540–543) interacts with ATP; the sequence is GLER.

Belongs to the class-II aminoacyl-tRNA synthetase family. Type 2 subfamily.

Its subcellular location is the cytoplasm. It carries out the reaction tRNA(Asp) + L-aspartate + ATP = L-aspartyl-tRNA(Asp) + AMP + diphosphate. The polypeptide is Aspartate--tRNA ligase, cytoplasmic 2 (aspS2) (Dictyostelium discoideum (Social amoeba)).